A 514-amino-acid chain; its full sequence is MDTMRSLRFISAEALVSHPQVARQSLDSVAHNLYPLLFKASYLLEQAEVTRAVLGRWPLEEFRLGALLGPGADHPQDLRDRTCRACLEALVRGLADHVLQDRSRRRLRVADLTGIRDVQVQRCPCGRALGRWGRTQLLARTCCELQAEPLAAGRPVEVLADLFVTEGNFEAVVQALRPAGPAPLRVHCPSFRADSLSPSQLLHVLRLAGPGALRKLEVVHNVRLHAGHVQQLLAQVGFPRLASLTLPTKAFDAPPTYASTPDGEDPLLASIARELSKMAQLTELSVAFSTLTGKIPTLLGPLQTPLRVLDLANCALNHTDMAFLADCAHAAHLEVLDLSGHNLVSLYPSTFFRLLSQASRTLRILTLEECGIVDSHVGMLILGLSPCHRLRQLKFLGNPLSARALRRLFTALCELPELRCIEFPVPKDCYPEGAAYPQDELAMSKFNQQKYDEIAEELRAVLLRADREDIQVSTPLFGSFDPDIQETSNELGAFLLQAFKTALENFSRALKQIE.

The stretch at 104–141 is one LRR 1; degenerate repeat; sequence RRRLRVADLTGIRDVQVQRCPCGRALGRWGRTQLLART. The LRR 2; degenerate repeat unit spans residues 185–209; sequence RVHCPSFRADSLSPSQLLHVLRLAG. The LRR 4; degenerate repeat unit spans residues 238-277; that stretch reads FPRLASLTLPTKAFDAPPTYASTPDGEDPLLASIARELSK. LRR repeat units lie at residues 278–302, 303–334, 335–350, 359–386, and 387–411; these read MAQLTELSVAFSTLTGKIPTLLGPL, QTPLRVLDLANCALNHTDMAFLADCAHAAHLE, VLDLSGHNLVSLYPST, SRTLRILTLEECGIVDSHVGMLILGLSP, and CHRLRQLKFLGNPLSARALRRLFTA.

The protein belongs to the PRAME family. LRRC14 subfamily.

The polypeptide is Leucine-rich repeat-containing protein 14B (Homo sapiens (Human)).